A 174-amino-acid polypeptide reads, in one-letter code: Probable nicotinate-nucleotide adenylyltransferase (174 aa).

Belongs to the NadD family.

The enzyme catalyses nicotinate beta-D-ribonucleotide + ATP + H(+) = deamido-NAD(+) + diphosphate. It participates in cofactor biosynthesis; NAD(+) biosynthesis; deamido-NAD(+) from nicotinate D-ribonucleotide: step 1/1. Functionally, catalyzes the reversible adenylation of nicotinate mononucleotide (NaMN) to nicotinic acid adenine dinucleotide (NaAD). This is Probable nicotinate-nucleotide adenylyltransferase from Helicobacter pylori (strain HPAG1).